The sequence spans 443 residues: Sulfoquinovose isomerase (443 aa).

This sequence belongs to the SqvD family.

It catalyses the reaction 6-sulfo-beta-D-quinovose = 6-deoxy-6-sulfo-D-fructose. Functionally, part of the sulfo-EMP2 pathway, a D-sulfoquinovose degradation pathway that produces sulfolactate (SL). Catalyzes the isomerization of sulfoquinovose (SQ) to 6-deoxy-6-sulfo-D-fructose (SF). This Alkalicoccus urumqiensis (Bacillus urumqiensis) protein is Sulfoquinovose isomerase.